The chain runs to 418 residues: Ankyrin repeat domain-containing protein 61 (418 aa).

8 ANK repeats span residues 27-57 (ALHS…NQPL), 74-103 (QPIF…DPEV), 131-160 (TRIQ…QVNA), 166-195 (NKHS…QVNA), 199-228 (SSMT…NVNC), 233-272 (TGNT…QVNA), 276-305 (EGQT…NVNI), and 309-342 (NGES…PLRL).

The protein is Ankyrin repeat domain-containing protein 61 (Ankrd61) of Rattus norvegicus (Rat).